Here is a 103-residue protein sequence, read N- to C-terminus: Cell division protein FtsB (103 aa).

Over 1–3 (MGK) the chain is Cytoplasmic. Residues 4–21 (LTLLLLAILVWLQYSLWF) form a helical membrane-spanning segment. The Periplasmic segment spans residues 22 to 103 (GKNGIHDYTR…RAQSAGQNNR (82 aa)). Residues 31–71 (RVNNDVAAQQATNAKLKARNDQLFAEIDDLNGGQEALEERA) adopt a coiled-coil conformation.

It belongs to the FtsB family. As to quaternary structure, part of a complex composed of FtsB, FtsL and FtsQ.

Its subcellular location is the cell inner membrane. Its function is as follows. Essential cell division protein. May link together the upstream cell division proteins, which are predominantly cytoplasmic, with the downstream cell division proteins, which are predominantly periplasmic. The polypeptide is Cell division protein FtsB (Escherichia coli O81 (strain ED1a)).